The following is a 385-amino-acid chain: MAKYFTSESVSAGHPDKIADQIADAILDAVLEQDPKARSAVEVTTSTGDVSIFGELSTNAYVNIRKIATDTIREIGYNHAELGFTADSVNVSNKIVEQSGDIAQAVDNAEDDPDQLGAGDQGMVFGYATNETDSYLPLTLALSHRLMRKIRDARENEILPYLRPDAKGEVTVELDDNDKVKRIAAVVLSTQHDDEVTLEQLRADIRKHVIDEVLPQDLVDEDTIYYINPSGRFVLGGPQADSGLTGRKIIVDTYGGAAHHGGGAFSGKDATKVDRSAAYYARYVAKNMVAAGVADKLELQVSYAIGVARPVSLNVDSFGTAKVSEEKINEIITKLFDFRPLAIINNLNLRRPIYKQTAAFGHFGRTDIDLPWESLDKVKEIKNLL.

H14 is an ATP binding site. D16 contributes to the Mg(2+) binding site. A K(+)-binding site is contributed by E42. The L-methionine site is built by E55 and Q98. The interval 98-108 is flexible loop; that stretch reads QSGDIAQAVDN. Residues 165-167, 232-233, D241, 247-248, A264, and K268 each bind ATP; these read DAK, RF, and RK. An L-methionine-binding site is contributed by D241. L-methionine is bound at residue K272.

It belongs to the AdoMet synthase family. In terms of assembly, homotetramer; dimer of dimers. Requires Mg(2+) as cofactor. K(+) serves as cofactor.

It is found in the cytoplasm. The enzyme catalyses L-methionine + ATP + H2O = S-adenosyl-L-methionine + phosphate + diphosphate. Its pathway is amino-acid biosynthesis; S-adenosyl-L-methionine biosynthesis; S-adenosyl-L-methionine from L-methionine: step 1/1. Its function is as follows. Catalyzes the formation of S-adenosylmethionine (AdoMet) from methionine and ATP. The overall synthetic reaction is composed of two sequential steps, AdoMet formation and the subsequent tripolyphosphate hydrolysis which occurs prior to release of AdoMet from the enzyme. The protein is S-adenosylmethionine synthase of Leuconostoc mesenteroides subsp. mesenteroides (strain ATCC 8293 / DSM 20343 / BCRC 11652 / CCM 1803 / JCM 6124 / NCDO 523 / NBRC 100496 / NCIMB 8023 / NCTC 12954 / NRRL B-1118 / 37Y).